The following is a 724-amino-acid chain: Methionine--tRNA ligase (724 aa).

Positions 12 to 22 match the 'HIGH' region motif; sequence PYVNNIPHLGN. The Zn(2+) site is built by Cys-143, Cys-146, Cys-155, and Cys-158. Residues 330–334 carry the 'KMSKS' region motif; that stretch reads KFSKS. Lys-333 serves as a coordination point for ATP. The 106-residue stretch at 560–665 folds into the tRNA-binding domain; that stretch reads FREKVLLKVV…KNPIPGERII (106 aa).

It belongs to the class-I aminoacyl-tRNA synthetase family. MetG type 1 subfamily. In terms of assembly, homodimer. Zn(2+) is required as a cofactor.

It is found in the cytoplasm. It carries out the reaction tRNA(Met) + L-methionine + ATP = L-methionyl-tRNA(Met) + AMP + diphosphate. Functionally, is required not only for elongation of protein synthesis but also for the initiation of all mRNA translation through initiator tRNA(fMet) aminoacylation. This Borrelia garinii subsp. bavariensis (strain ATCC BAA-2496 / DSM 23469 / PBi) (Borreliella bavariensis) protein is Methionine--tRNA ligase.